A 348-amino-acid chain; its full sequence is N-formyl peptide receptor 2 (348 aa).

An N-linked (GlcNAc...) asparagine glycan is attached at Asn1. Topologically, residues 1–24 are extracellular; sequence NFSTPLNEYEEGSYESAGYTVLRI. Residues 25 to 47 traverse the membrane as a helical segment; the sequence is LPLVVLGVTFVLGVLGNGLVIWV. Residues 48–58 lie on the Cytoplasmic side of the membrane; it reads AGFRMTRTVTT. A helical transmembrane segment spans residues 59–80; sequence ICYLNLALADFSFTATLPFLIV. Residues 81-97 are Extracellular-facing; the sequence is SMAMGEKWPFGWFLCKL. A disulfide bridge connects residues Cys95 and Cys173. The chain crosses the membrane as a helical span at residues 98–118; the sequence is IHIVVDINLFGSVFLIGFIAL. At 119-137 the chain is on the cytoplasmic side; it reads DRCICVLHPVWAQNHRTVS. Residues 138-159 traverse the membrane as a helical segment; that stretch reads LAMKVIVGPWILALVLTLPVFL. Residues 160–202 are Extracellular-facing; that stretch reads FLTTVTIPNGDTYCTFNFASWGGTPEERLKVAITLLTARGIIR. The helical transmembrane segment at 203–223 threads the bilayer; the sequence is FVIGFSLPMSIVAICYGLIAA. Over 224 to 239 the chain is Cytoplasmic; that stretch reads KIHKKGMIKSSRPLRV. A helical transmembrane segment spans residues 240 to 263; sequence LTAVVASFFICWFPFQLVALLGTV. At 264-283 the chain is on the extracellular side; sequence WLKEMLFYGKYKIIDILVNP. Residues 284–303 traverse the membrane as a helical segment; sequence TSSLAFFNCCLNPMLYVFVG. Topologically, residues 304–348 are cytoplasmic; that stretch reads QDFRERLIHSLPTSLERALSEDSAPTNDTAANCASPPAETELQAM. The interval 322–348 is disordered; it reads LSEDSAPTNDTAANCASPPAETELQAM. Positions 326–335 are enriched in polar residues; that stretch reads SAPTNDTAAN.

Belongs to the G-protein coupled receptor 1 family. In terms of assembly, interacts with Amyloid-beta protein 42, product of APP; the interaction takes place at the cell surface and the complex is then rapidly internalized.

It is found in the cell membrane. In terms of biological role, low affinity receptor for N-formyl-methionyl peptides, which are powerful neutrophil chemotactic factors. Binding of FMLP to the receptor causes activation of neutrophils. This response is mediated via a G-protein that activates a phosphatidylinositol-calcium second messenger system. Receptor for the chemokine-like protein FAM19A5, mediating FAM19A5-stimulated macrophage chemotaxis and the inhibitory effect on TNFSF11/RANKL-induced osteoclast differentiation. The chain is N-formyl peptide receptor 2 (FPR2) from Pan troglodytes (Chimpanzee).